A 61-amino-acid chain; its full sequence is Metallothionein-2B (61 aa).

Met-1 carries the post-translational modification N-acetylmethionine. The beta stretch occupies residues 1-29 (MDPNCSCATGDSCTCASSCKCKECKCTSC). Residues Cys-5, Cys-7, Cys-13, Cys-15, Cys-19, Cys-21, Cys-24, Cys-26, Cys-29, Cys-33, Cys-34, Cys-36, Cys-37, Cys-41, Cys-44, Cys-48, Cys-50, Cys-57, Cys-59, and Cys-60 each contribute to the a divalent metal cation site. Positions 30 to 61 (KKSCCSCCPAGCTKCAQGCICKGASDKCSCCA) are alpha.

It belongs to the metallothionein superfamily. Type 1 family. Monomer.

Its function is as follows. Metallothioneins have a high content of cysteine residues that bind various heavy metals; these proteins are transcriptionally regulated by both heavy metals and glucocorticoids. The protein is Metallothionein-2B of Oryctolagus cuniculus (Rabbit).